We begin with the raw amino-acid sequence, 391 residues long: Succinate--CoA ligase [ADP-forming] subunit beta (391 aa).

The 240-residue stretch at 9–248 (KDILRKFGVA…ITEEDPFEVE (240 aa)) folds into the ATP-grasp domain. ATP contacts are provided by residues Lys-50, 57-59 (GRG), Glu-103, Met-106, and Glu-111. 2 residues coordinate Mg(2+): Asn-203 and Asp-217. Substrate-binding positions include Asn-268 and 325–327 (GIV).

The protein belongs to the succinate/malate CoA ligase beta subunit family. Heterotetramer of two alpha and two beta subunits. It depends on Mg(2+) as a cofactor.

It catalyses the reaction succinate + ATP + CoA = succinyl-CoA + ADP + phosphate. The catalysed reaction is GTP + succinate + CoA = succinyl-CoA + GDP + phosphate. It functions in the pathway carbohydrate metabolism; tricarboxylic acid cycle; succinate from succinyl-CoA (ligase route): step 1/1. In terms of biological role, succinyl-CoA synthetase functions in the citric acid cycle (TCA), coupling the hydrolysis of succinyl-CoA to the synthesis of either ATP or GTP and thus represents the only step of substrate-level phosphorylation in the TCA. The beta subunit provides nucleotide specificity of the enzyme and binds the substrate succinate, while the binding sites for coenzyme A and phosphate are found in the alpha subunit. The protein is Succinate--CoA ligase [ADP-forming] subunit beta of Chlorobium phaeovibrioides (strain DSM 265 / 1930) (Prosthecochloris vibrioformis (strain DSM 265)).